We begin with the raw amino-acid sequence, 5478 residues long: Mucin-12 (5478 aa).

Positions 1 to 16 (MLVIWILTLALRLCAS) are cleaved as a signal peptide. At 17–5380 (VTTVTPEGSA…EFNIAKSLVY (5364 aa)) the chain is on the extracellular side. 3 N-linked (GlcNAc...) asparagine glycosylation sites follow: Asn154, Asn170, and Asn176. The segment at 212–737 (LDSSTNSGHS…GSTETTLLPD (526 aa)) is disordered. The stretch at 222-240 (EESTVSHSGPGATGTTLFP) is repeat 1. The interval 222–4761 (EESTVSHSGP…PGSTQTMHFP (4540 aa)) is 28 X 19 AA approximate tandem repeats of E-E-S-X-X-X-H-X-X-P-X-X-T-X-T-X-X-X-P. 4 stretches are compositionally biased toward polar residues: residues 226–246 (VSHSGPGATGTTLFPSHSATS), 255–288 (SPITSASMETTALPGSTTTAGLSEKSTTFYSSPR), 296–313 (PARTTSSGVSEKSTTSHS), and 325–342 (DSTTMPGVSQESTASHSI). The segment covering 343 to 366 (PGSTDTTLSPGTTTPSSLGPESTT) has biased composition (low complexity). Residues 367 to 387 (FHSSPGYTKTTRLPDNTTTSG) are compositionally biased toward polar residues. A glycan (N-linked (GlcNAc...) asparagine) is linked at Asn382. Low complexity predominate over residues 396–413 (HSSTGSPHTTLSPSSSTT). Positions 419–440 (TTFQSWPSSKDTSPAPSGTTSA) are enriched in polar residues. Low complexity-rich tracts occupy residues 445–466 (STTYHSSPSSTPTTHFSASSTT) and 478–495 (SSPVATATTPPPARSATS). 2 repeat units span residues 471-489 (EESTPVHSSPVATATTPPP) and 499-517 (EESTAYHRSPGSTQTMHFP). Low complexity predominate over residues 531 to 554 (TFHGSTTHTKSSTPSTTAALAHTS). 2 stretches are compositionally biased toward polar residues: residues 555-575 (YHSSLGSTETTHFRDSSTISG) and 608-648 (STPS…SPDT). Residues 654–669 (SMTSSGVSEESTTSHS) are compositionally biased toward low complexity. Repeat 4 spans residues 662–680 (EESTTSHSRPGSTHTTAFP). 2 stretches are compositionally biased toward polar residues: residues 670–715 (RPGS…TASS) and 722–737 (TFHSRPGSTETTLLPD). Asn738 is a glycosylation site (N-linked (GlcNAc...) asparagine). Disordered stretches follow at residues 749 to 4847 (MPVH…HFTT), 4887 to 5034 (SSRS…THTV), 5048 to 5071 (STAFHSSSDATGTTPLPARSTASD), and 5093 to 5112 (ASSSTSGLTEESTTFHTSPS). 2 stretches are compositionally biased toward polar residues: residues 751-783 (VHSSTRSPHTTLSPAGSTTRQGESTTFHSWPSS) and 792-842 (TTTS…TQTM). Copy 5 of the repeat occupies 827–845 (EESTTYHSSPGSTQTMHFP). The span at 859 to 877 (TSHSSTTHTISSAPSTTSA) shows a compositional bias: low complexity. Composition is skewed to polar residues over residues 884–899 (SYHSSPGSTATTHFPD) and 928–970 (RSTT…TTFH). Residues 971–1007 (SSPRSPATTLSPASTTSSGVSEESTTSRSRPGSTHTT) show a composition bias toward low complexity. Residues 1009 to 1021 (FPDSTTTPGLSRH) show a composition bias toward polar residues. Residues 1022-1065 (STTSHSSPGSTDTTLLPASTTTSGPSQESTTSHSSSGSTDTALS) show a composition bias toward low complexity. 2 stretches are compositionally biased toward polar residues: residues 1066–1101 (PGSTTALSFGQESTTFHSNPGSTHTTLFPDSTTSSG) and 1108–1138 (RVHSSTGSPRTTLSPASSTSPGLQGESTAFQ). The segment covering 1139–1157 (THPASTHTTPSPPSTATAP) has biased composition (low complexity). Copy 6 of the repeat occupies 1159–1177 (EESTTYHRSPGSTPTTHFP). Composition is skewed to polar residues over residues 1160–1184 (ESTTYHRSPGSTPTTHFPASSTTSG) and 1191–1207 (IFHSSPDASGTTPSSAH). Low complexity-rich tracts occupy residues 1208–1220 (STTSGRGESTTSR), 1229–1241 (TTLPGSTTTPGLS), and 1249–1262 (SSPRSPTTTLSPAS). Composition is skewed to polar residues over residues 1271-1324 (ESTT…TTSV), 1331-1357 (TFHSRPASTHTTLFTEDSTTSGLTEES), and 1364-1377 (PASTQTGLPATLTT). Composition is skewed to low complexity over residues 1384–1396 (STTFPSSSGSTGT) and 1411–1438 (ESTPSRLSPSSTETTTLPGSPTTPSLSE). The span at 1439-1448 (KSTTFYTSPR) shows a compositional bias: polar residues. The span at 1458 to 1481 (TTTSSGVSEESSTSHSQPGSTHTT) shows a compositional bias: low complexity. Copy 7 of the repeat occupies 1466 to 1484 (EESSTSHSQPGSTHTTAFP). Polar residues predominate over residues 1483 to 1537 (FPDSTTTSDLSQEPTTSHSSQGSTEATLSPGSTTASSLGQQSTTFHSSPGDTETT). The segment covering 1552-1568 (STPTHSSTGSLHTTLTP) has biased composition (low complexity). Polar residues-rich tracts occupy residues 1569 to 1586 (ASSTSAGLQEESTTFQSW) and 1606 to 1630 (VSTTYHSRPSSTPTTHFSASSTTLG). The stretch at 1633 to 1651 (EESTTVHSSPGATGTALFP) is repeat 8. The span at 1653-1708 (RSATSVLVGEPTTSPISSGSTETTALPGSTTTAGLSEKSTTFYSSPRSPDTTLSPA) shows a compositional bias: polar residues. The span at 1709 to 1724 (STTSSGVSEESTTSHS) shows a compositional bias: low complexity. Repeat 9 spans residues 1717 to 1735 (EESTTSHSRPGSTHTTAFP). Polar residues-rich tracts occupy residues 1725 to 1797 (RPGS…TTAS) and 1805 to 1840 (PVHSSTGSPHTTLSPAGSTTRQGESTTFQSWPSSKD). An N-linked (GlcNAc...) asparagine glycan is attached at Asn1793. 2 stretches are compositionally biased toward low complexity: residues 1856–1877 (STTSHGSPSSTPTTHFSASSTT) and 1889–1906 (SSPVATATTPSPARSTTS). A run of 2 repeats spans residues 1882–1900 (EESTTVHSSPVATATTPSP) and 1910–1928 (EESTAYHSSPGSTQTMHFP). The span at 1914 to 1935 (AYHSSPGSTQTMHFPESSTASG) shows a compositional bias: polar residues. Positions 1943–1959 (SHSSTTHTISSPPSTTS) are enriched in low complexity. Polar residues-rich tracts occupy residues 1967–1982 (SYHSSPGSTATTHFPD) and 2011–2053 (RSTT…TTFH). The span at 2054–2082 (SSPRSPATTLSPASTTSSGVSEESTTSHS) shows a compositional bias: low complexity. Residues 2075–2093 (EESTTSHSRPGSTHTTAFP) form repeat 12. The span at 2083-2104 (RPGSTHTTAFPDSTTTPGLSRH) shows a compositional bias: polar residues. The span at 2105-2130 (STTSHSSPGSTDTTLLPASTTTSGPS) shows a compositional bias: low complexity. Composition is skewed to polar residues over residues 2131–2184 (QEST…TSSG) and 2191–2221 (RVHSSTGSPRTTLSPASSTSPGLQGESTAFQ). Low complexity predominate over residues 2222 to 2240 (THPASTHTTPSPPSTATAP). Repeat 13 spans residues 2242 to 2260 (EESTTYHRSPGSTPTTHFP). Polar residues-rich tracts occupy residues 2243–2267 (ESTTYHRSPGSTPTTHFPASSTTSG) and 2274–2290 (IFHSSPDASGTTPSSAH). Low complexity-rich tracts occupy residues 2291–2303 (STTSGRGESTTSR), 2312–2324 (TTLPGSTTTPGLS), and 2332–2345 (SSPRSPTTTLSPAS). Over residues 2354-2392 (ESTTSRSQPGSTHSTVSPASTTTPGLSEESTTVYSSSPG) the composition is skewed to polar residues. Low complexity predominate over residues 2393-2407 (STETTVFPRTPTTSV). Composition is skewed to polar residues over residues 2414 to 2440 (TFHSRPASTHTTLFTEDSTTSGLTEES) and 2447 to 2460 (PASTQTGLPATLTT). Low complexity-rich tracts occupy residues 2467-2483 (STTFPSSSGSTGTTLSP) and 2494-2521 (ESTPSRLSPSSTETTTLPGSPTTPSLSE). Polar residues predominate over residues 2522 to 2531 (KSTTFYTSPR). Over residues 2541–2564 (TTTSSGVSEESSTSHSQPGSTHTT) the composition is skewed to low complexity. Repeat unit 14 spans residues 2549-2567 (EESSTSHSQPGSTHTTAFP). Residues 2566–2578 (FPDSTTTPGLSRH) are compositionally biased toward polar residues. The span at 2579 to 2604 (STTSHSSPGSTDTTLLPASTTTSGPS) shows a compositional bias: low complexity. Composition is skewed to polar residues over residues 2605–2658 (QEST…TSSG) and 2665–2695 (RVHSSTGSPRTTLSPASSTSPGLQGESTTFQ). The segment covering 2696–2714 (THPASTHTTPSPPSTATAP) has biased composition (low complexity). Residues 2716–2734 (EESTTYHRSPGSTPTTHFP) form repeat 15. 2 stretches are compositionally biased toward polar residues: residues 2717-2741 (ESTTYHRSPGSTPTTHFPASSTTSG) and 2748-2764 (IFHSSPDASGTTPSSAH). 3 stretches are compositionally biased toward low complexity: residues 2765 to 2777 (STTSGRGESTTSR), 2786 to 2798 (TTLPGSTTTPGLS), and 2806 to 2819 (SSPRSPTTTLSPAS). Polar residues-rich tracts occupy residues 2828 to 2881 (ESTT…TTSV), 2888 to 2914 (TFHSRPASTHTTLFTEDSTTSGLTEES), and 2921 to 2934 (PASTQTGLPATLTT). 2 stretches are compositionally biased toward low complexity: residues 2941 to 2957 (STTFPSSSGSTGTTLSP) and 2968 to 2995 (ESTPSRLSPSSTETTTLPGSPTTPSLSE). Positions 2996-3005 (KSTTFYTSPR) are enriched in polar residues. Low complexity predominate over residues 3015 to 3038 (TTTSSGVSEESSTSHSQPGSTHTT). Repeat unit 16 spans residues 3023–3041 (EESSTSHSQPGSTHTTAFP). Residues 3040–3094 (FPDSTTTSGLSQEPTASHSSQGSTEATLSPGSTTASSLGQQSTTFHSSPGDTETT) show a composition bias toward polar residues. Positions 3109–3125 (STPTHSSTGSLHTTLTP) are enriched in low complexity. Composition is skewed to polar residues over residues 3126 to 3143 (ASSTSAGLQEESTTFQSW) and 3163 to 3187 (VSTTYHSRPSSTPTTHFSASSTTLG). Repeat unit 17 spans residues 3190–3208 (EESTTVHSSPGATGTALFP). Residues 3210–3265 (RSATSVLVGEPTTSPISSGSTETTALPGSTTTAGLSEKSTTFYSSPRSPDTTLSPA) are compositionally biased toward polar residues. Positions 3266 to 3281 (STTSSGVSEESTTSHS) are enriched in low complexity. Repeat unit 18 spans residues 3274–3292 (EESTTSHSRPGSTHTTAFP). Polar residues-rich tracts occupy residues 3282–3354 (RPGS…TTAS) and 3362–3397 (PVHSSTGSPHTTLSPAGSTTRQGESTTFQSWPNSKD). Asn3350 carries N-linked (GlcNAc...) asparagine glycosylation. Composition is skewed to low complexity over residues 3413–3434 (STTSHGSPSSTPTTHFSASSTT) and 3446–3463 (SSPVATATTPSPARSTTS). 2 tandem repeats follow at residues 3439–3457 (EESTTVHSSPVATATTPSP) and 3467–3485 (EESTTYHSSPGSTQTMHFP). Polar residues predominate over residues 3468–3482 (ESTTYHSSPGSTQTM). The span at 3499–3517 (TSHSSTTHTISSAPSTTSA) shows a compositional bias: low complexity. Composition is skewed to polar residues over residues 3524 to 3539 (SYHSSPGSTATTHFPD) and 3568 to 3610 (RSTT…TTFH). Over residues 3611 to 3639 (SSPRSPATTLSPASTTSSGVSEESTTSHS) the composition is skewed to low complexity. Residues 3632-3650 (EESTTSHSRPGSTHTTAFP) form repeat 21. Residues 3640–3661 (RPGSTHTTAFPDSTTTPGLSRH) are compositionally biased toward polar residues. Positions 3662–3705 (STTSHSSPGSTDTTLLPASTTTSGSSQESTTSHSSSGSTDTALS) are enriched in low complexity. Polar residues-rich tracts occupy residues 3706–3741 (PGSTTALSFGQESTTFHSSPGSTHTTLFPDSTTSSG) and 3748–3778 (RVHSSTGSPRTTLSPASSTSPGLQGESTAFQ). Residues 3779–3797 (THPASTHTTPSPPSTATAP) show a composition bias toward low complexity. Repeat 22 spans residues 3799 to 3817 (EESTTYHRSPGSTPTTHFP). 2 stretches are compositionally biased toward polar residues: residues 3800–3824 (ESTTYHRSPGSTPTTHFPASSTTSG) and 3831–3847 (IFHSSPDASGTTPSSAH). Composition is skewed to low complexity over residues 3848–3860 (STTSGRGESTTSR), 3869–3881 (TTLPGSTTTPGLS), and 3889–3902 (SSPRSPTTTLSPAS). Composition is skewed to polar residues over residues 3911-3963 (ESTT…TTTS), 3971-3997 (TFHSRPASTHTTLFTEDSTTSGLTEES), and 4004-4017 (PASTQTGLPATLTT). Composition is skewed to low complexity over residues 4024-4036 (STTFPSSSGSTGT) and 4051-4078 (ESTPSRLSPSSTETTTLPGSPTTPSLSE). Residues 4079 to 4088 (KSTTFYTSPR) show a composition bias toward polar residues. A compositionally biased stretch (low complexity) spans 4098-4121 (TTTSSGVSEESSTSHSQPGSTHTT). Repeat 23 spans residues 4106-4124 (EESSTSHSQPGSTHTTAFP). Residues 4123–4177 (FPDSTTTSGLSQEPTTSHSSQGSTEATLSPGSTTASSLGQQSTTFHSSPGDTETT) show a composition bias toward polar residues. Over residues 4192-4208 (STPTHSSTGSLHTTLTP) the composition is skewed to low complexity. A compositionally biased stretch (polar residues) spans 4209-4226 (ASSTSTGLQEESTTFQSW). The span at 4227-4249 (PSSSDTTPSPPSTTAVPVEVSTT) shows a compositional bias: low complexity. A compositionally biased stretch (polar residues) spans 4250–4270 (YHSRPSSTPTTHFSASSTTLG). Residues 4273–4291 (EESTTVHSSPGATGTALFP) form repeat 24. Residues 4293 to 4348 (RSATSVLVGEPTTSPISSGSTETTALPGSTTTAGLSEKSTTFYSSPRSPDTTLSPA) are compositionally biased toward polar residues. Low complexity predominate over residues 4349–4364 (STTSSGVSEESTTSHS). Polar residues-rich tracts occupy residues 4369–4437 (MHTT…TTAS) and 4445–4480 (PVHSSTGSPHTTLSPAGSTTRQGESTTFQSWPNSKD). Asn4433 is a glycosylation site (N-linked (GlcNAc...) asparagine). 2 stretches are compositionally biased toward low complexity: residues 4496-4517 (STTSHGSPSSTPTTHFSASSTT) and 4529-4546 (SSPVATATTPSPARSTTS). Repeat copies occupy residues 4522–4540 (EESTTVHSSPVATATTPSP) and 4550–4568 (EESTTYHSSPGSTQTMHFP). The segment covering 4551-4571 (ESTTYHSSPGSTQTMHFPESN) has biased composition (polar residues). A glycan (N-linked (GlcNAc...) asparagine) is linked at Asn4571. Over residues 4582 to 4600 (TSHSSTTHTISSAPSTTSA) the composition is skewed to low complexity. Composition is skewed to polar residues over residues 4607–4622 (SYHSSPGSTATTHFPD) and 4651–4688 (RSTTSVLLGESTTSPISSGSMETTALPGSTTTPGLSEK). Low complexity-rich tracts occupy residues 4689-4710 (STTFHSSPSSTPTTHFSASSTT) and 4722-4739 (SSPVATATTPSPARSTTS). Tandem repeats lie at residues 4715–4733 (EESTTVHSSPVATATTPSP) and 4743–4761 (EESTAYHSSPGSTQTMHFP). Polar residues predominate over residues 4747 to 4768 (AYHSSPGSTQTMHFPESSTASG). Residues 4776-4792 (SHSSTTHTISSPPSTTS) are compositionally biased toward low complexity. Composition is skewed to polar residues over residues 4800 to 4814 (SYHSSPGSIATTHFP) and 4887 to 4917 (SSRSPDQTLSPASMTSSSISGEPTSLYSQAE). Residues 4918–4931 (STHTTAFPASTTTS) show a composition bias toward low complexity. Polar residues-rich tracts occupy residues 4932–5024 (GLSQ…STPF) and 5048–5061 (STAFHSSSDATGTT). The span at 5094-5112 (SSSTSGLTEESTTFHTSPS) shows a compositional bias: low complexity. The EGF-like domain occupies 5116-5154 (TIVSTESLETLAPGLCQEGQIWNGKQCVCPQGYVGYQCL). The cysteines at positions 5144 and 5153 are disulfide-linked. Residues 5168–5275 (LNATLGMTVK…TRTTLLDPDS (108 aa)) enclose the SEA domain. Residues Asn5169, Asn5182, Asn5197, Asn5228, and Asn5264 are each glycosylated (N-linked (GlcNAc...) asparagine). The Cleavage motif motif lies at 5226–5233 (LLNGSIVV). The chain crosses the membrane as a helical span at residues 5381 to 5401 (GIVGAVMAVLLLALIILIILF). The Cytoplasmic portion of the chain corresponds to 5402–5478 (SLSQRKRHRE…QRPEMVASTV (77 aa)).

Ubiquitous, with higher expression in colon. Down-regulated in colorectal cancer as well as in the colon of patients with ulcerative colitis (UC) and Crohn's disease (CD).

It is found in the membrane. Functionally, involved in epithelial cell protection, adhesion modulation, and signaling. May be involved in epithelial cell growth regulation. Stimulated by both cytokine TNF-alpha and TGF-beta in intestinal epithelium. The protein is Mucin-12 (MUC12) of Homo sapiens (Human).